The following is a 155-amino-acid chain: MNDRGIIICVGIAFLIFIFLWAYFKNKKVKTGNYGNYSYYDKLTDRLDAKLGHDSSFMIQHYLDPENCPLYGDLPTLSQLVNLKQNNPSKYEELVNDGTVKRAVNIKALKTWLLLGSSNVDKFKHFMNQVNQLNIDKVDMLNLENALKYQLSKTQ.

The chain crosses the membrane as a helical span at residues G5–K25.

The protein resides in the membrane. This is an uncharacterized protein from Acheta domesticus (House cricket).